Here is a 267-residue protein sequence, read N- to C-terminus: Trehalose 2-sulfotransferase (267 aa).

Residues Gln14, Glu33–Gln39, Pro48, and Trp53 contribute to the alpha,alpha-trehalose site. The active-site Proton acceptor is Glu36.

The protein belongs to the Stf0 sulfotransferase family. Homodimer.

The catalysed reaction is alpha,alpha-trehalose + 3'-phosphoadenylyl sulfate = 2-O-sulfo-alpha,alpha-trehalose + adenosine 3',5'-bisphosphate + H(+). The protein operates within glycolipid metabolism. Catalyzes the sulfuryl group transfer from 3'-phosphoadenosine-5'-phosphosulfate (PAPS) to trehalose, leading to trehalose-2-sulfate (T2S). The sulfation of trehalose is the first step in the biosynthesis of sulfolipid-1 (SL-1), a major cell wall glycolipid in pathogenic mycobacteria. Cannot use free glucose and unnatural stereoisomers of trehalose (alpha,beta (neo-trehalose) and beta,beta (iso-trehalose)) as substrates. In Mycolicibacterium smegmatis (strain ATCC 700084 / mc(2)155) (Mycobacterium smegmatis), this protein is Trehalose 2-sulfotransferase.